The chain runs to 427 residues: 3-phosphoshikimate 1-carboxyvinyltransferase (427 aa).

3-phosphoshikimate contacts are provided by Lys-20, Ser-21, and Arg-25. A phosphoenolpyruvate-binding site is contributed by Lys-20. Gly-92 and Arg-120 together coordinate phosphoenolpyruvate. The 3-phosphoshikimate site is built by Ser-166, Gln-168, Asp-312, and Lys-339. Gln-168 provides a ligand contact to phosphoenolpyruvate. Asp-312 acts as the Proton acceptor in catalysis. The phosphoenolpyruvate site is built by Arg-343 and Arg-385.

Belongs to the EPSP synthase family. As to quaternary structure, monomer.

The protein localises to the cytoplasm. It carries out the reaction 3-phosphoshikimate + phosphoenolpyruvate = 5-O-(1-carboxyvinyl)-3-phosphoshikimate + phosphate. It functions in the pathway metabolic intermediate biosynthesis; chorismate biosynthesis; chorismate from D-erythrose 4-phosphate and phosphoenolpyruvate: step 6/7. Catalyzes the transfer of the enolpyruvyl moiety of phosphoenolpyruvate (PEP) to the 5-hydroxyl of shikimate-3-phosphate (S3P) to produce enolpyruvyl shikimate-3-phosphate and inorganic phosphate. The sequence is that of 3-phosphoshikimate 1-carboxyvinyltransferase from Streptococcus agalactiae serotype Ia (strain ATCC 27591 / A909 / CDC SS700).